Consider the following 121-residue polypeptide: Protein TCL1B5 (121 aa).

Belongs to the TCL1 family.

The chain is Protein TCL1B5 (Tcl1b5) from Mus musculus (Mouse).